Here is a 90-residue protein sequence, read N- to C-terminus: Large ribosomal subunit protein bL31 (90 aa).

The disordered stretch occupies residues 65–90 (YSKQEGSGSKSNKSKSTKSKKGKGKK). Residues 76-90 (NKSKSTKSKKGKGKK) show a composition bias toward basic residues.

The protein belongs to the bacterial ribosomal protein bL31 family. Type A subfamily. In terms of assembly, part of the 50S ribosomal subunit.

Its function is as follows. Binds the 23S rRNA. In Trichodesmium erythraeum (strain IMS101), this protein is Large ribosomal subunit protein bL31.